Here is a 580-residue protein sequence, read N- to C-terminus: Arginine--tRNA ligase (580 aa).

The short motif at 127-137 is the 'HIGH' region element; that stretch reads PNLAKEMHVGH.

The protein belongs to the class-I aminoacyl-tRNA synthetase family. Monomer.

The protein localises to the cytoplasm. It carries out the reaction tRNA(Arg) + L-arginine + ATP = L-arginyl-tRNA(Arg) + AMP + diphosphate. In Idiomarina loihiensis (strain ATCC BAA-735 / DSM 15497 / L2-TR), this protein is Arginine--tRNA ligase.